The sequence spans 261 residues: Guanine nucleotide exchange factor BopE (261 aa).

The span at 241 to 253 (RRAAQDASRDEKG) shows a compositional bias: basic and acidic residues. The disordered stretch occupies residues 241-261 (RRAAQDASRDEKGAANAADGA).

This sequence belongs to the GEF (guanine exchange factor) SopE family. Monomer. Interacts with human CDC42.

The protein localises to the secreted. Its function is as follows. Activator for both CDC42 and RAC1 by directly interacting with these Rho GTPases and acting as a guanine nucleotide exchange factor (GEF). This activation results in actin cytoskeleton rearrangements and stimulates membrane ruffling, thus promoting bacterial entry into non-phagocytic cells. In Burkholderia thailandensis (strain ATCC 700388 / DSM 13276 / CCUG 48851 / CIP 106301 / E264), this protein is Guanine nucleotide exchange factor BopE (bopE).